Consider the following 289-residue polypeptide: Delta-sarcoglycan (289 aa).

The Cytoplasmic portion of the chain corresponds to 1 to 35 (MPQEQYTHHRSTMPGSVGPQVYKVGIYGWRKRCLY). The helical; Signal-anchor for type II membrane protein transmembrane segment at 36 to 56 (FFVLLLMILILVNLAMTIWIL) threads the bilayer. The Extracellular portion of the chain corresponds to 57-289 (KVMNFTIDGM…TCQINTSVCL (233 aa)). N-linked (GlcNAc...) asparagine glycosylation is found at N60 and N108. 2 disulfides stabilise this stretch: C263-C288 and C265-C281. An N-linked (GlcNAc...) asparagine glycan is attached at N284.

Belongs to the sarcoglycan beta/delta/gamma/zeta family. As to quaternary structure, interacts with FLNC and DAG1. Cross-link to form 2 major subcomplexes: one consisting of SGCB, SGCD and SGCG and the other consisting of SGCB and SGCD. The association between SGCB and SGCG is particularly strong while SGCA is loosely associated with the other sarcoglycans. Post-translationally, glycosylated. In terms of processing, disulfide bonds are present. In terms of tissue distribution, most strongly expressed in skeletal and cardiac muscle. Also detected in smooth muscle. Weak expression in brain and lung.

The protein localises to the cell membrane. Its subcellular location is the sarcolemma. It is found in the cytoplasm. The protein resides in the cytoskeleton. Functionally, component of the sarcoglycan complex, a subcomplex of the dystrophin-glycoprotein complex which forms a link between the F-actin cytoskeleton and the extracellular matrix. The sequence is that of Delta-sarcoglycan (SGCD) from Homo sapiens (Human).